The sequence spans 150 residues: Globin-3 (150 aa).

Residues proline 11–tyrosine 150 form the Globin domain. Histidine 74 and histidine 106 together coordinate heme b.

It belongs to the globin family. As to quaternary structure, monomer.

This chain is Globin-3, found in Petromyzon marinus (Sea lamprey).